Consider the following 159-residue polypeptide: NADH-quinone oxidoreductase subunit B (159 aa).

Positions 36, 37, 102, and 132 each coordinate [4Fe-4S] cluster.

It belongs to the complex I 20 kDa subunit family. As to quaternary structure, NDH-1 is composed of 14 different subunits. Subunits NuoB, C, D, E, F, and G constitute the peripheral sector of the complex. Requires [4Fe-4S] cluster as cofactor.

It is found in the cell inner membrane. It carries out the reaction a quinone + NADH + 5 H(+)(in) = a quinol + NAD(+) + 4 H(+)(out). NDH-1 shuttles electrons from NADH, via FMN and iron-sulfur (Fe-S) centers, to quinones in the respiratory chain. Couples the redox reaction to proton translocation (for every two electrons transferred, four hydrogen ions are translocated across the cytoplasmic membrane), and thus conserves the redox energy in a proton gradient. In Verminephrobacter eiseniae (strain EF01-2), this protein is NADH-quinone oxidoreductase subunit B.